A 505-amino-acid polypeptide reads, in one-letter code: Lysine--tRNA ligase (505 aa).

Mg(2+) is bound by residues Glu415 and Glu422.

Belongs to the class-II aminoacyl-tRNA synthetase family. In terms of assembly, homodimer. Mg(2+) serves as cofactor.

Its subcellular location is the cytoplasm. The catalysed reaction is tRNA(Lys) + L-lysine + ATP = L-lysyl-tRNA(Lys) + AMP + diphosphate. The protein is Lysine--tRNA ligase of Xanthomonas axonopodis pv. citri (strain 306).